The primary structure comprises 426 residues: Glutamate-1-semialdehyde 2,1-aminomutase (426 aa).

Residue lysine 265 is modified to N6-(pyridoxal phosphate)lysine.

It belongs to the class-III pyridoxal-phosphate-dependent aminotransferase family. HemL subfamily. Homodimer. The cofactor is pyridoxal 5'-phosphate.

Its subcellular location is the cytoplasm. The enzyme catalyses (S)-4-amino-5-oxopentanoate = 5-aminolevulinate. Its pathway is porphyrin-containing compound metabolism; protoporphyrin-IX biosynthesis; 5-aminolevulinate from L-glutamyl-tRNA(Glu): step 2/2. This Salmonella schwarzengrund (strain CVM19633) protein is Glutamate-1-semialdehyde 2,1-aminomutase.